The primary structure comprises 149 residues: Nucleoside diphosphate kinase (149 aa).

Residues Lys-9, Phe-57, Arg-85, Thr-91, Arg-102, and Asn-112 each contribute to the ATP site. The active-site Pros-phosphohistidine intermediate is the His-115.

The protein belongs to the NDK family. As to quaternary structure, homotetramer. Requires Mg(2+) as cofactor.

The protein localises to the cytoplasm. The enzyme catalyses a 2'-deoxyribonucleoside 5'-diphosphate + ATP = a 2'-deoxyribonucleoside 5'-triphosphate + ADP. It carries out the reaction a ribonucleoside 5'-diphosphate + ATP = a ribonucleoside 5'-triphosphate + ADP. Major role in the synthesis of nucleoside triphosphates other than ATP. The ATP gamma phosphate is transferred to the NDP beta phosphate via a ping-pong mechanism, using a phosphorylated active-site intermediate. This chain is Nucleoside diphosphate kinase, found in Herpetosiphon aurantiacus (strain ATCC 23779 / DSM 785 / 114-95).